The chain runs to 119 residues: UPF0102 protein GFO_3098 (119 aa).

This sequence belongs to the UPF0102 family.

The polypeptide is UPF0102 protein GFO_3098 (Christiangramia forsetii (strain DSM 17595 / CGMCC 1.15422 / KT0803) (Gramella forsetii)).